We begin with the raw amino-acid sequence, 1176 residues long: Serine/threonine-protein kinase pakF (1176 aa).

Low complexity-rich tracts occupy residues 1–19 (MSNL…ESSS) and 32–52 (NLLN…SGSN). 2 disordered regions span residues 1 to 231 (MSNL…HESR) and 254 to 361 (LPST…KKTK). Residues 64–76 (QLPPNYTPPPPPH) are compositionally biased toward pro residues. Positions 92-133 (LNNENSDNNNNNNNNNNNNNNNNNNNNNNNNNNNEQLARTES) form a coiled coil. Composition is skewed to low complexity over residues 93-125 (NNEN…NNNN), 133-148 (SSVS…SNSG), and 156-172 (SSNI…ETYS). Positions 173–197 (MSPNQTLNSNIDSSEQQHQDLSSSV) are enriched in polar residues. A compositionally biased stretch (low complexity) spans 198–226 (NNNNNNNNNNNNNNNNNNNNNNNNNNNNN). Over residues 254 to 289 (LPSTPTQQNVEIQTTNGGSSETSPNGLISPRPSNDQ) the composition is skewed to polar residues. The segment covering 316–353 (SLSSSTTTPSTTSSLTSSPSSSSLAISSPNTTAATTTN) has biased composition (low complexity). A CRIB domain is found at 370–383 (ISVPYNVIHKMHVD). Positions 394-646 (FILDEKLGDG…PIDLLCHPFL (253 aa)) constitute a Protein kinase domain. ATP-binding positions include 400 to 408 (LGDGAYGSV) and Lys423. Residue Asp514 is the Proton acceptor of the active site. Disordered stretches follow at residues 670 to 723 (IDDL…SDEL), 753 to 885 (QEEE…GNNL), 968 to 1083 (HTTS…TGRA), and 1112 to 1176 (NSNS…NIKK). Low complexity-rich tracts occupy residues 682–693 (SQSSSSSSPQSP) and 710–720 (SIISPIPSSPS). Composition is skewed to acidic residues over residues 767-789 (DEQD…EDVD) and 813-844 (DQDD…DEEI). Residues 812–873 (SDQDDEEEDE…NKKKNKKNNL (62 aa)) are a coiled coil. Residues 852–870 (VRKKKNKSTKKSNKKKNKK) are compositionally biased toward basic residues. Polar residues-rich tracts occupy residues 873–884 (LSTIGKSGSGNN) and 968–985 (HTTS…ATNL). Composition is skewed to low complexity over residues 991–1044 (SSSP…RPNS), 1051–1066 (NNSS…SSSS), and 1148–1176 (SSGS…NIKK).

This sequence belongs to the protein kinase superfamily. STE Ser/Thr protein kinase family. STE20 subfamily. Mg(2+) is required as a cofactor.

It carries out the reaction L-seryl-[protein] + ATP = O-phospho-L-seryl-[protein] + ADP + H(+). It catalyses the reaction L-threonyl-[protein] + ATP = O-phospho-L-threonyl-[protein] + ADP + H(+). This Dictyostelium discoideum (Social amoeba) protein is Serine/threonine-protein kinase pakF.